The sequence spans 394 residues: Putative F-box protein At5g66830 (394 aa).

Positions 17-63 (DWCWSKLPSDLMQFVFDRLGFADFQRAKSVCSSWLSVSRNSQPNNQI) constitute an F-box domain.

The chain is Putative F-box protein At5g66830 from Arabidopsis thaliana (Mouse-ear cress).